The sequence spans 429 residues: Glutamyl-tRNA reductase (429 aa).

Substrate is bound by residues threonine 50–arginine 53, serine 108, glutamate 113–glutamine 115, and glutamine 119. Cysteine 51 functions as the Nucleophile in the catalytic mechanism. Glycine 188 to isoleucine 193 is a binding site for NADP(+).

The protein belongs to the glutamyl-tRNA reductase family. In terms of assembly, homodimer.

It carries out the reaction (S)-4-amino-5-oxopentanoate + tRNA(Glu) + NADP(+) = L-glutamyl-tRNA(Glu) + NADPH + H(+). It functions in the pathway porphyrin-containing compound metabolism; protoporphyrin-IX biosynthesis; 5-aminolevulinate from L-glutamyl-tRNA(Glu): step 1/2. Functionally, catalyzes the NADPH-dependent reduction of glutamyl-tRNA(Glu) to glutamate 1-semialdehyde (GSA). The protein is Glutamyl-tRNA reductase of Polaromonas naphthalenivorans (strain CJ2).